The following is a 1102-amino-acid chain: Avirulence protein AvrXa10 (1102 aa).

Disordered regions lie at residues methionine 1 to serine 68 and alanine 127 to glutamine 151. Residues proline 130–alanine 140 are compositionally biased toward basic residues. A compositionally biased stretch (low complexity) spans alanine 141–glutamine 151. 15 Core repeat repeats span residues leucine 288–glycine 321, leucine 322–glycine 355, leucine 356–glycine 389, leucine 390–glycine 423, leucine 424–glycine 457, leucine 458–glycine 491, leucine 492–glycine 525, leucine 526–glycine 559, leucine 560–glycine 593, leucine 594–glycine 627, leucine 628–glycine 661, leucine 662–glycine 695, leucine 696–glycine 729, leucine 730–glycine 763, and leucine 764–glycine 797. Residues leucine 798 to asparagine 809 form a Core repeat 15.5 repeat. The short motif at lysine 951–lysine 954 is the Nuclear localization sequence A (NLSA) element. The segment covering aspartate 978 to glutamine 990 has biased composition (basic and acidic residues). Residues aspartate 978–glutamine 1021 are disordered. The short motif at lysine 997–arginine 1000 is the Nuclear localization sequence B (NLSB) element. Positions lysine 1034–arginine 1037 match the Nuclear localization sequence C (NLSC) motif. Residues tryptophan 1063 to proline 1093 form an activation domain region.

The protein belongs to the transcription activator-like effector (TALE) family.

It is found in the secreted. The protein localises to the host nucleus. Functionally, avirulence protein. Induces the hypersensitive response (HR)in rice plants carrying the resistance gene Xa10. Activity depends on the presence of the core repeat domains; replacement with repeat domains from other proteins (AvrBs3 of X.euvesicatoria (AC P14727) or AvrXa7 of this organism) does not elicit the HR. Probably acts as a transcription factor in its host plant (rice) to induce plant resistance or disease. The chain is Avirulence protein AvrXa10 from Xanthomonas oryzae pv. oryzae.